Consider the following 110-residue polypeptide: uncharacterized protein (110 aa).

Residues 29–49 (GLAFIFFFLVAFYFFPAFWDL) form a helical membrane-spanning segment.

The protein resides in the membrane. This is an uncharacterized protein from Saccharomyces cerevisiae (strain ATCC 204508 / S288c) (Baker's yeast).